We begin with the raw amino-acid sequence, 405 residues long: Adenosylhomocysteinase (405 aa).

Residues D113 and E138 each coordinate substrate. 139 to 141 (TTT) is an NAD(+) binding site. Substrate-binding residues include K168 and D172. NAD(+) is bound by residues N173, 202–207 (GYGWCG), E225, N260, 281–283 (AGH), and N327.

This sequence belongs to the adenosylhomocysteinase family. NAD(+) serves as cofactor.

It localises to the cytoplasm. It carries out the reaction S-adenosyl-L-homocysteine + H2O = L-homocysteine + adenosine. It participates in amino-acid biosynthesis; L-homocysteine biosynthesis; L-homocysteine from S-adenosyl-L-homocysteine: step 1/1. Its function is as follows. May play a key role in the regulation of the intracellular concentration of adenosylhomocysteine. The chain is Adenosylhomocysteinase from Archaeoglobus fulgidus (strain ATCC 49558 / DSM 4304 / JCM 9628 / NBRC 100126 / VC-16).